The chain runs to 498 residues: Putative BTB/POZ domain-containing protein L788 (498 aa).

Positions 28–99 constitute a BTB domain; the sequence is TDIILVLEDD…FYGQKIKSGN (72 aa).

The protein belongs to the mimivirus BTB/WD family.

In Acanthamoeba polyphaga (Amoeba), this protein is Putative BTB/POZ domain-containing protein L788.